The chain runs to 299 residues: Class II hydrophobin C (299 aa).

The signal sequence occupies residues 1–17 (MKFLTVAAAIFASTSLA). N-linked (GlcNAc...) asparagine glycosylation is found at asparagine 39, asparagine 78, and asparagine 91. Disulfide bonds link cysteine 232–cysteine 281, cysteine 242–cysteine 272, cysteine 243–cysteine 255, and cysteine 282–cysteine 293.

The protein belongs to the cerato-ulmin hydrophobin family.

The protein resides in the secreted. The protein localises to the cell wall. Its subcellular location is the vacuole. It is found in the cytoplasmic vesicle. In terms of biological role, aerial growth, conidiation, and dispersal of filamentous fungi in the environment rely upon a capability of their secreting small amphipathic proteins called hydrophobins (HPBs) with low sequence identity. Class I can self-assemble into an outermost layer of rodlet bundles on aerial cell surfaces, conferring cellular hydrophobicity that supports fungal growth, development and dispersal; whereas Class II form highly ordered films at water-air interfaces through intermolecular interactions but contribute nothing to the rodlet structure. Hyd2C contributes to certain cell wall-related features, such as hydrophobicity but is not involved in cell wall-related events during fungal proliferation in host hemocoel. Does not contribute to conidial hydrophobicity. Involved actively in the asexual development. The sequence is that of Class II hydrophobin C from Beauveria bassiana (strain ARSEF 2860) (White muscardine disease fungus).